Here is a 589-residue protein sequence, read N- to C-terminus: Protein MICRORCHIDIA 3 (589 aa).

The tract at residues 1 to 33 (MAPESKNAGVSVVVNLDSDSDSDNDDGVGGRGA) is disordered. Positions 542–589 (MRCEEYVKKETELEQTVSNLAKELEETKSKCARLALLVDAKRREMQQV) form a coiled coil.

The protein belongs to the MORC ATPase protein family. As to quaternary structure, homodimer and heterodimer. Component of an RNA-directed DNA methylation (RdDM) complex. Mg(2+) serves as cofactor. It depends on Mn(2+) as a cofactor.

It is found in the nucleus. Exhibits ATPase activity. Binds DNA/RNA in a non-specific manner and exhibits endonuclease activity. Probably involved in DNA repair. Involved in RNA-directed DNA methylation (RdDM) as a component of the RdDM machinery and required for gene silencing. May also be involved in the regulation of chromatin architecture to maintain gene silencing. This Arabidopsis thaliana (Mouse-ear cress) protein is Protein MICRORCHIDIA 3.